Consider the following 29-residue polypeptide: Cyclotide mobo-B (29 aa).

Positions 1–29 (GKPICGETCAKGKCYTPKCTCNWPICYKN) form a cross-link, cyclopeptide (Gly-Asn). Disulfide bonds link C5-C19, C9-C21, and C14-C26.

The protein belongs to the cyclotide family. This is a cyclic peptide.

Functionally, probably participates in a plant defense mechanism. This is Cyclotide mobo-B from Melicytus obovatus (Hymenanthera obovata).